Here is a 212-residue protein sequence, read N- to C-terminus: Thymidylate kinase (212 aa).

An ATP-binding site is contributed by 10 to 17 (GPDGAGKT).

Belongs to the thymidylate kinase family.

The catalysed reaction is dTMP + ATP = dTDP + ADP. Phosphorylation of dTMP to form dTDP in both de novo and salvage pathways of dTTP synthesis. This chain is Thymidylate kinase, found in Exiguobacterium sibiricum (strain DSM 17290 / CCUG 55495 / CIP 109462 / JCM 13490 / 255-15).